Here is a 361-residue protein sequence, read N- to C-terminus: 3-dehydroquinate synthase (361 aa).

NAD(+) is bound by residues D69 to K74, G103 to D107, T127 to T128, K140, K149, and T167 to T170. Zn(2+) is bound by residues E182, H245, and H262.

This sequence belongs to the sugar phosphate cyclases superfamily. Dehydroquinate synthase family. Requires Co(2+) as cofactor. Zn(2+) serves as cofactor. NAD(+) is required as a cofactor.

The protein localises to the cytoplasm. The catalysed reaction is 7-phospho-2-dehydro-3-deoxy-D-arabino-heptonate = 3-dehydroquinate + phosphate. The protein operates within metabolic intermediate biosynthesis; chorismate biosynthesis; chorismate from D-erythrose 4-phosphate and phosphoenolpyruvate: step 2/7. Catalyzes the conversion of 3-deoxy-D-arabino-heptulosonate 7-phosphate (DAHP) to dehydroquinate (DHQ). In Thioalkalivibrio sulfidiphilus (strain HL-EbGR7), this protein is 3-dehydroquinate synthase.